The chain runs to 453 residues: MREVISIHIGQAGVQVGNACWELYCLEHGIQPDGLMPSDKTIGVEDDAFNTFFSETGAGKHVPRAVFLDLEPTVVDEVRTGTYRQLFHPEQLITGKEDAANNYARGHYTIGKEIVDLCLDRIRKLADNCTGLQGFLVFSSVGGGTGSGLGALLLERLSVDYGKKSKLGFTVYPSPQVATAVVEPYNSVLSTHALLEHTDVAVMLDNEAIYDICRRSLDIQRPTYTNLNRLIAQVISSLTASLRFDGALNVDVTEFQTNLVPYPRIHFMLCSYAPVISAEKAYHEQLSVAEITNSAFEPASMMAKCDPRHGKYMACCLMYRGDVVPKDVNAAVATIKTKRTIQFVDWSPTGFKCGINYQPPTVVPGGDLAKVQRAVCMISNSTAIAEVFSRIDHKFDLMYAKRAFVHWYVGEGMEEGEFSEAREDLAALEKDYEEVGTESQEGDGEEGEDGGDQ.

GTP is bound at residue Q11. The residue at position 40 (K40) is an N6-acetyllysine. Positions 71, 140, 144, 145, 179, 206, and 228 each coordinate GTP. Residue E71 coordinates Mg(2+). E254 is a catalytic residue. Positions 429 to 453 are disordered; it reads EKDYEEVGTESQEGDGEEGEDGGDQ. Over residues 431-453 the composition is skewed to acidic residues; the sequence is DYEEVGTESQEGDGEEGEDGGDQ.

Belongs to the tubulin family. As to quaternary structure, dimer of alpha and beta chains. A typical microtubule is a hollow water-filled tube with an outer diameter of 25 nm and an inner diameter of 15 nM. Alpha-beta heterodimers associate head-to-tail to form protofilaments running lengthwise along the microtubule wall with the beta-tubulin subunit facing the microtubule plus end conferring a structural polarity. Microtubules usually have 13 protofilaments but different protofilament numbers can be found in some organisms and specialized cells. The cofactor is Mg(2+). In terms of processing, acetylation of alpha chains at Lys-40 stabilizes microtubules and affects affinity and processivity of microtubule motors. This modification has a role in multiple cellular functions, ranging from cell motility, cell cycle progression or cell differentiation to intracellular trafficking and signaling.

The protein localises to the cytoplasm. Its subcellular location is the cytoskeleton. The catalysed reaction is GTP + H2O = GDP + phosphate + H(+). In terms of biological role, tubulin is the major constituent of microtubules, a cylinder consisting of laterally associated linear protofilaments composed of alpha- and beta-tubulin heterodimers. Microtubules grow by the addition of GTP-tubulin dimers to the microtubule end, where a stabilizing cap forms. Below the cap, tubulin dimers are in GDP-bound state, owing to GTPase activity of alpha-tubulin. In Naegleria gruberi (Amoeba), this protein is Tubulin alpha-1/2/3 chain (TBA1).